The chain runs to 582 residues: Protein bps2 (582 aa).

ATP is bound at residue 28–35 (APNAYGKT). Residues 243–281 (RQSYERQLQEINAQLQKITAQRNEAEIEIRLLEKVLDQI) adopt a coiled-coil conformation. The Zinc-hook domain occupies 243-351 (RQSYERQLQE…KLKELDQISS (109 aa)). Zn(2+)-binding residues include Cys-292 and Cys-295. A coiled-coil region spans residues 320-351 (SLYAGIKKEADELLSKKSEIEKKLKELDQISS).

The sequence is that of Protein bps2 (bps2) from Acidianus ambivalens (Desulfurolobus ambivalens).